We begin with the raw amino-acid sequence, 572 residues long: Hsp70-Hsp90 organizing protein 1 (572 aa).

3 TPR repeats span residues Ala2 to Asn35, Val37 to Trp69, and Pro70 to Asn103. In terms of domain architecture, STI1 1 spans Gly133–Tyr172. Residue Ser167 is modified to Phosphoserine. A disordered region spans residues Lys189–Lys248. A compositionally biased stretch (basic and acidic residues) spans Thr232–Lys248. Positions Lys241–Lys258 match the Bipartite nuclear localization signal motif. TPR repeat units lie at residues Ala244–Asp277, Ser279–Leu311, Ala319–Pro356, Thr358–Leu382, Gly383–Asp416, Lys418–Phe450, and Ser451–Asn484. An STI1 2 domain is found at Asp521–Ile560.

As to quaternary structure, co-chaperone that forms a complex with HSP70 and HSP90 and preproteins (e.g. chloroplast preproteins). In terms of processing, phosphorylated. Post-translationally, acetylated.

The protein resides in the cytoplasm. It localises to the nucleus. Mediates the association of the molecular chaperones HSP70 and HSP90. Mediates nuclear encoded chloroplast preproteins binding to HSP90 prior to chloroplastic sorting. This chain is Hsp70-Hsp90 organizing protein 1 (HOP1), found in Arabidopsis thaliana (Mouse-ear cress).